Consider the following 950-residue polypeptide: Sodium/calcium exchanger Calx (950 aa).

An N-terminal signal peptide occupies residues 1-22 (MQLLLKSIFTCALFVIFVYATA). Topologically, residues 23–120 (QSLLKVQETE…PQRNISVGDR (98 aa)) are extracellular. N-linked (GlcNAc...) asparagine glycosylation is found at Asn39, Asn47, and Asn114. The chain crosses the membrane as a helical span at residues 121–141 (LVRGFVYFVLLIYLFVGVSII). Over 142-179 (ADRFMAAIEAITSIERAVVVKGPNNTKQVMHVRIWNET) the chain is Cytoplasmic. The chain crosses the membrane as a helical span at residues 180–200 (VANLTLMALGSSAPEILLSVI). At 201–216 (EIYAKDFESGDLGPGT) the chain is on the extracellular side. A helical transmembrane segment spans residues 217-237 (IVGSAAYNLFMIIAVCMIWIP). Over 238-257 (AGEVRRIRHLRVFFVTALFS) the chain is Cytoplasmic. 2 consecutive transmembrane segments (helical) span residues 258 to 278 (VFAY…VILV) and 279 to 299 (WEAI…YIAE). Residues 300–749 (RRLLVYKYMD…NDDEEEEVPS (450 aa)) lie on the Cytoplasmic side of the membrane. The corresponds to the exchanger inhibitory peptide (XIP) found in other sodium/calcium exchange proteins and thought to be involved in calmodulin binding stretch occupies residues 301 to 318 (RLLVYKYMDKNYRVNKRG). The Calx-beta 1 domain occupies 440 to 551 (DPIRMYFEPG…MIATVMILDD (112 aa)). Ca(2+)-binding residues include Glu455, Asp490, Asp515, Asp516, Val518, Glu520, Glu523, Asp550, Asp551, and Asp552. The 140-residue stretch at 555–694 (GIFAFTDSVF…LTTAYVRIRE (140 aa)) folds into the Calx-beta 2 domain. The chain crosses the membrane as a helical span at residues 750 to 770 (CFSYVSHFVCLFWKVLFAFVP). The Extracellular segment spans residues 771–775 (PTDIC). Residues 776–796 (GGYVTFVVSIFVIGVITAIIG) traverse the membrane as a helical segment. The Cytoplasmic portion of the chain corresponds to 797-813 (DAASYFGCALNIKDSVT). The chain crosses the membrane as a helical span at residues 814 to 834 (AILFVALGTSIPDTFASMIAA). Residues 835–848 (KHDEGADNCIGNVT) lie on the Extracellular side of the membrane. N-linked (GlcNAc...) asparagine glycosylation occurs at Asn846. The helical transmembrane segment at 849-869 (GSNAVNVFLGIGLAWTIAAVY) threads the bilayer. The Cytoplasmic portion of the chain corresponds to 870-883 (HSSHGMTFNVEPGT). The chain crosses the membrane as a helical span at residues 884–904 (IGFAVALFCGEALIAIMLIMF). Over 905 to 923 (RRWHKGIGAELGGPKVSKY) the chain is Extracellular. The chain crosses the membrane as a helical span at residues 924-944 (ISAAILVFLWVFYVVICILEA). The Cytoplasmic portion of the chain corresponds to 945-950 (YDVIRV).

The protein belongs to the Ca(2+):cation antiporter (CaCA) (TC 2.A.19) family. SLC8 subfamily. As to expression, ubiquitously expressed with higher expression in head compared to body (at protein level). Enriched in photoreceptor cells of the eye (at protein level). In the adult head, expressed in retina, optic ganglia and all neuronal tissues.

Its subcellular location is the cell membrane. It is found in the cell projection. The protein resides in the rhabdomere membrane. The enzyme catalyses Ca(2+)(in) + 3 Na(+)(out) = Ca(2+)(out) + 3 Na(+)(in). Activated by a Na(+) electrochemical gradient but also undergoes Na(2+)-dependent inactivation. Inhibited by micromolar levels of cytoplasmic Ca(2+), which is the opposite of most characterized mammalian homologs. With respect to regulation, exhibits greater extent of inhibition by Ca(2+) than isoform D/1.2. Its activity is regulated as follows. Exhibits greater Na(2+)-dependent inactivation than isoform A/1.1, probably due to greater stability of the inactive Na(2+)-bound form. In terms of biological role, na(+)/Ca(2+) antiporter that couples the energy of a Na(+) electrochemical gradient to the movement of Ca(2+) against an electrochemical gradient across a membrane, which contributes to the regulation of cytoplasmic Ca(2+) levels. Mediates Na(+)/Ca(2+) exchange in photoreceptor cells and involved in controlling Ca(2+) levels during phototransduction, affecting magnitude of the photoresponse, activation kinetics, signal amplification, response termination, and light adaptation. Light induced depolarization of photoreceptor cells, resulting in Na(+) and Ca(2+) entry through trp/transient receptor potential protein channels, is essential for photoreceptor cell function but may result in toxic levels of cytoplasmic Ca(2+). Na(+)/Ca(2+) antiporter regulation of Ca(2+) levels protects photoreceptor cells from light-dependent retinal degeneration. In Drosophila melanogaster (Fruit fly), this protein is Sodium/calcium exchanger Calx.